The sequence spans 200 residues: Pyrrolidone-carboxylate peptidase (200 aa).

Catalysis depends on residues Glu78, Cys141, and His165.

This sequence belongs to the peptidase C15 family. As to quaternary structure, homotetramer.

Its subcellular location is the cytoplasm. The catalysed reaction is Release of an N-terminal pyroglutamyl group from a polypeptide, the second amino acid generally not being Pro.. Its function is as follows. Removes 5-oxoproline from various penultimate amino acid residues except L-proline. The polypeptide is Pyrrolidone-carboxylate peptidase (Lactobacillus acidophilus (strain ATCC 700396 / NCK56 / N2 / NCFM)).